Reading from the N-terminus, the 137-residue chain is Putative nucleoside diphosphate kinase (137 aa).

ATP-binding residues include F45, R73, T79, R90, and N100. Residue H103 is the Pros-phosphohistidine intermediate of the active site.

This sequence belongs to the NDK family. The cofactor is Mg(2+).

The catalysed reaction is a 2'-deoxyribonucleoside 5'-diphosphate + ATP = a 2'-deoxyribonucleoside 5'-triphosphate + ADP. It carries out the reaction a ribonucleoside 5'-diphosphate + ATP = a ribonucleoside 5'-triphosphate + ADP. Major role in the synthesis of nucleoside triphosphates other than ATP. The ATP gamma phosphate is transferred to the NDP beta phosphate via a ping-pong mechanism, using a phosphorylated active-site intermediate. This chain is Putative nucleoside diphosphate kinase (NME2P1), found in Homo sapiens (Human).